The following is a 392-amino-acid chain: Chorismate synthase (392 aa).

NADP(+) is bound by residues Arg39 and Arg45. FMN contacts are provided by residues 128–130 (RSS), 248–249 (QA), Gly300, 315–319 (KPIPT), and Arg341.

The protein belongs to the chorismate synthase family. In terms of assembly, homotetramer. The cofactor is FMNH2.

The enzyme catalyses 5-O-(1-carboxyvinyl)-3-phosphoshikimate = chorismate + phosphate. It participates in metabolic intermediate biosynthesis; chorismate biosynthesis; chorismate from D-erythrose 4-phosphate and phosphoenolpyruvate: step 7/7. In terms of biological role, catalyzes the anti-1,4-elimination of the C-3 phosphate and the C-6 proR hydrogen from 5-enolpyruvylshikimate-3-phosphate (EPSP) to yield chorismate, which is the branch point compound that serves as the starting substrate for the three terminal pathways of aromatic amino acid biosynthesis. This reaction introduces a second double bond into the aromatic ring system. The sequence is that of Chorismate synthase from Trichlorobacter lovleyi (strain ATCC BAA-1151 / DSM 17278 / SZ) (Geobacter lovleyi).